The sequence spans 322 residues: Ferrochelatase (322 aa).

Positions 193 and 274 each coordinate Fe cation.

This sequence belongs to the ferrochelatase family.

It is found in the cytoplasm. It carries out the reaction heme b + 2 H(+) = protoporphyrin IX + Fe(2+). It participates in porphyrin-containing compound metabolism; protoheme biosynthesis; protoheme from protoporphyrin-IX: step 1/1. In terms of biological role, catalyzes the ferrous insertion into protoporphyrin IX. The chain is Ferrochelatase from Photobacterium profundum (strain SS9).